A 221-amino-acid chain; its full sequence is Putative gene 53 protein (221 aa).

The sequence is that of Putative gene 53 protein (53) from Bacillus phage SP01 (Bacteriophage SP01).